The sequence spans 252 residues: Protein BTG3 (252 aa).

Positions 138–162 (VTSDYHSGSSSSDEETSKEMEVKPS) are disordered.

This sequence belongs to the BTG family. In terms of tissue distribution, ubiquitous. High expression in the ventricular zone of the developing central nervous system. High in ovary, testis, prostate, thymus and lung.

Functionally, overexpression impairs serum-induced cell cycle progression from the G0/G1 to S phase. In Homo sapiens (Human), this protein is Protein BTG3 (BTG3).